We begin with the raw amino-acid sequence, 743 residues long: Beta-galactosidase (743 aa).

The Proton donor role is filled by E388. E453 acts as the Nucleophile in catalysis.

Belongs to the glycosyl hydrolase 2 family. In terms of assembly, homodimer.

The enzyme catalyses Hydrolysis of terminal non-reducing beta-D-galactose residues in beta-D-galactosides.. Functionally, beta-galactosidase. The chain is Beta-galactosidase (lacZ) from Thermoanaerobacter pseudethanolicus (strain ATCC 33223 / 39E) (Clostridium thermohydrosulfuricum).